Here is a 420-residue protein sequence, read N- to C-terminus: Gamma-glutamyl phosphate reductase (420 aa).

It belongs to the gamma-glutamyl phosphate reductase family.

It is found in the cytoplasm. The catalysed reaction is L-glutamate 5-semialdehyde + phosphate + NADP(+) = L-glutamyl 5-phosphate + NADPH + H(+). It functions in the pathway amino-acid biosynthesis; L-proline biosynthesis; L-glutamate 5-semialdehyde from L-glutamate: step 2/2. Catalyzes the NADPH-dependent reduction of L-glutamate 5-phosphate into L-glutamate 5-semialdehyde and phosphate. The product spontaneously undergoes cyclization to form 1-pyrroline-5-carboxylate. The protein is Gamma-glutamyl phosphate reductase of Cereibacter sphaeroides (strain KD131 / KCTC 12085) (Rhodobacter sphaeroides).